The primary structure comprises 325 residues: Interferon regulatory factor 1 (325 aa).

Residues 5–113 constitute a DNA-binding region (IRF tryptophan pentad repeat); the sequence is RMRMRPWLEM…SAVRVYRMLP (109 aa). An N6-acetyllysine modification is found at Lys78. The interval 92-165 is disordered; it reads EEVKDQSRNK…TLPDDHSSYT (74 aa). The segment covering 141–157 has biased composition (polar residues); that stretch reads GDSSPDTFSDGLSSSTL. Glycyl lysine isopeptide (Lys-Gly) (interchain with G-Cter in SUMO) cross-links involve residues Lys275 and Lys299.

This sequence belongs to the IRF family. In terms of assembly, monomer. Homodimer. Interacts with EP300. Interacts with MYD88. Interacts with PIAS3. Interacts with SPOP. Phosphorylated by CK2 and this positively regulates its activity. In terms of processing, sumoylation represses the transcriptional activity and displays enhanced resistance to protein degradation. Sumoylated by UBE2I/UBC9 and SUMO1. Inactivates the tumor suppressor activity. Elevated levels in tumor cells. Major site is Lys-275. Sumoylation is enhanced by PIAS3. Desumoylated by SENP1 in tumor cells and appears to compete with ubiquitination on C-terminal sites. Post-translationally, ubiquitinated in a SPOP-depedent manner. Appears to compete with sumoylation on C-terminal sites.

The protein localises to the nucleus. It localises to the cytoplasm. With respect to regulation, activated by MYD88. In terms of biological role, transcriptional regulator which displays a remarkable functional diversity in the regulation of cellular responses. Regulates transcription of IFN and IFN-inducible genes, host response to viral and bacterial infections, regulation of many genes expressed during hematopoiesis, inflammation, immune responses and cell proliferation and differentiation, regulation of the cell cycle and induction of growth arrest and programmed cell death following DNA damage. Stimulates both innate and acquired immune responses through the activation of specific target genes and can act as a transcriptional activator and repressor regulating target genes by binding to an interferon-stimulated response element (ISRE) in their promoters. Has an essentail role in IFNG-dependent immunity to mycobacteria. Competes with the transcriptional repressor ZBED2 for binding to a common consensus sequence in gene promoters. Its target genes for transcriptional activation activity include: genes involved in anti-viral response, such as IFN-alpha/beta, RIGI, TNFSF10/TRAIL, ZBP1, OAS1/2, PIAS1/GBP, EIF2AK2/PKR and RSAD2/viperin; antibacterial response, such as GBP2, GBP5 and NOS2/INOS; anti-proliferative response, such as p53/TP53, LOX and CDKN1A; apoptosis, such as BBC3/PUMA, CASP1, CASP7 and CASP8; immune response, such as IL7, IL12A/B and IL15, PTGS2/COX2 and CYBB; DNA damage responses and DNA repair, such as POLQ/POLH; MHC class I expression, such as TAP1, PSMB9/LMP2, PSME1/PA28A, PSME2/PA28B and B2M and MHC class II expression, such as CIITA; metabolic enzymes, such as ACOD1/IRG1. Represses genes involved in anti-proliferative response, such as BIRC5/survivin, CCNB1, CCNE1, CDK1, CDK2 and CDK4 and in immune response, such as FOXP3, IL4, ANXA2 and TLR4. Stimulates p53/TP53-dependent transcription through enhanced recruitment of EP300 leading to increased acetylation of p53/TP53. Plays an important role in immune response directly affecting NK maturation and activity, macrophage production of IL12, Th1 development and maturation of CD8+ T-cells. Also implicated in the differentiation and maturation of dendritic cells and in the suppression of regulatory T (Treg) cells development. Acts as a tumor suppressor and plays a role not only in antagonism of tumor cell growth but also in stimulating an immune response against tumor cells. The sequence is that of Interferon regulatory factor 1 (IRF1) from Homo sapiens (Human).